The primary structure comprises 249 residues: Leucyl/phenylalanyl-tRNA--protein transferase (249 aa).

The tract at residues 1–21 is disordered; it reads MSRTLPHLLSPDPASPFPPAE.

The protein belongs to the L/F-transferase family.

It localises to the cytoplasm. It catalyses the reaction N-terminal L-lysyl-[protein] + L-leucyl-tRNA(Leu) = N-terminal L-leucyl-L-lysyl-[protein] + tRNA(Leu) + H(+). It carries out the reaction N-terminal L-arginyl-[protein] + L-leucyl-tRNA(Leu) = N-terminal L-leucyl-L-arginyl-[protein] + tRNA(Leu) + H(+). The enzyme catalyses L-phenylalanyl-tRNA(Phe) + an N-terminal L-alpha-aminoacyl-[protein] = an N-terminal L-phenylalanyl-L-alpha-aminoacyl-[protein] + tRNA(Phe). In terms of biological role, functions in the N-end rule pathway of protein degradation where it conjugates Leu, Phe and, less efficiently, Met from aminoacyl-tRNAs to the N-termini of proteins containing an N-terminal arginine or lysine. The protein is Leucyl/phenylalanyl-tRNA--protein transferase of Xanthomonas campestris pv. campestris (strain B100).